Reading from the N-terminus, the 74-residue chain is Conotoxin Vc6.8 (74 aa).

A signal peptide spans Met1–Ala19. The propeptide occupies Leu20 to Ser34. Disulfide bonds link Cys49–Cys62, Cys55–Cys66, and Cys61–Cys70.

This sequence belongs to the conotoxin O2 superfamily. As to expression, expressed by the venom duct.

It localises to the secreted. In terms of biological role, inhibits voltage-gated ion channels. The chain is Conotoxin Vc6.8 from Conus victoriae (Queen Victoria cone).